Consider the following 62-residue polypeptide: Potassium channel toxin alpha-KTx 10.1 (62 aa).

A signal peptide spans methionine 1 to alanine 22. A propeptide spanning residues asparagine 23–alanine 28 is cleaved from the precursor. Intrachain disulfides connect cysteine 31/cysteine 50, cysteine 36/cysteine 55, and cysteine 40/cysteine 57. At tyrosine 60 the chain carries Tyrosine amide.

It belongs to the short scorpion toxin superfamily. Potassium channel inhibitor family. Alpha-KTx 10 subfamily. In terms of tissue distribution, expressed by the venom gland.

The protein localises to the secreted. Its function is as follows. Blocks Shaker B (Sh) and voltage-gated potassium-channels Kv1.1/KCNA1, Kv1.2/KCNA2, Kv1.3/KCNA3. Also inhibits small conductance calcium-activated potassium channels (KCNN) and intermediate conductance calcium-activated potassium channel (KCa3.1/KCNN4). The sequence is that of Potassium channel toxin alpha-KTx 10.1 from Centruroides noxius (Mexican scorpion).